We begin with the raw amino-acid sequence, 113 residues long: ATP-dependent Clp protease adapter protein ClpS (113 aa).

Residues 1–11 (MTRPTIPPGPP) show a composition bias toward pro residues. Disordered regions lie at residues 1 to 24 (MTRP…ERTE) and 92 to 113 (TAHA…SEGE).

Belongs to the ClpS family. Binds to the N-terminal domain of the chaperone ClpA.

Its function is as follows. Involved in the modulation of the specificity of the ClpAP-mediated ATP-dependent protein degradation. In Deinococcus radiodurans (strain ATCC 13939 / DSM 20539 / JCM 16871 / CCUG 27074 / LMG 4051 / NBRC 15346 / NCIMB 9279 / VKM B-1422 / R1), this protein is ATP-dependent Clp protease adapter protein ClpS.